The following is a 290-amino-acid chain: GTPase Era (290 aa).

The 168-residue stretch at 2–169 folds into the Era-type G domain; that stretch reads KSGFAAILGR…KNKIYENFSE (168 aa). Residues 10 to 17 form a G1 region; it reads GRPSTGKS. A GTP-binding site is contributed by 10 to 17; sequence GRPSTGKS. Residues 36–40 form a G2 region; the sequence is QTTRN. The segment at 57 to 60 is G3; the sequence is DTPG. GTP contacts are provided by residues 57 to 61 and 119 to 122; these read DTPGF and NKID. Positions 119–122 are G4; it reads NKID. Residues 148–150 are G5; it reads ISA. In terms of domain architecture, KH type-2 spans 200–276; sequence LKEELPYSLY…NLFLQVKLKK (77 aa).

The protein belongs to the TRAFAC class TrmE-Era-EngA-EngB-Septin-like GTPase superfamily. Era GTPase family. In terms of assembly, monomer.

It is found in the cytoplasm. It localises to the cell inner membrane. Its function is as follows. An essential GTPase that binds both GDP and GTP, with rapid nucleotide exchange. Plays a role in 16S rRNA processing and 30S ribosomal subunit biogenesis and possibly also in cell cycle regulation and energy metabolism. In Borreliella burgdorferi (strain ATCC 35210 / DSM 4680 / CIP 102532 / B31) (Borrelia burgdorferi), this protein is GTPase Era.